The sequence spans 510 residues: NAD(P)H-quinone oxidoreductase subunit 2 A, chloroplastic (510 aa).

Transmembrane regions (helical) follow at residues 31-51 (FIFPECILIFGLILLLMIDLT), 59-79 (WFYFISSTSLVISITALLFRW), 99-119 (IFQFLILLCSTLCIPLSVEYI), 124-144 (MAITEFLLFVLTATLGGMFLC), 149-169 (LITIFVALECFSLCSYLLSGY), 184-204 (LLMGGASSSILVLGFSWLYGL), 229-249 (ISIALIFITVGLGFKLSLAPF), 261-281 (PTPVVAFLSVTSKVAALALAT), 295-315 (WHLLLEILAILSMILGNLLAI), 323-343 (MLAYSSIGQIGYVIIGIIVGD), 354-374 (YMLFYISMNLGTFACIVLFGL), 395-415 (ALSLALCLLSLGGLPPLAGFF), 418-438 (LYLFWCGWQAGLYFLVSIGLL), and 484-504 (MTVCVIASTILGISMNPILAI).

Belongs to the complex I subunit 2 family. In terms of assembly, NDH is composed of at least 16 different subunits, 5 of which are encoded in the nucleus.

It is found in the plastid. The protein localises to the chloroplast thylakoid membrane. It carries out the reaction a plastoquinone + NADH + (n+1) H(+)(in) = a plastoquinol + NAD(+) + n H(+)(out). The catalysed reaction is a plastoquinone + NADPH + (n+1) H(+)(in) = a plastoquinol + NADP(+) + n H(+)(out). Its function is as follows. NDH shuttles electrons from NAD(P)H:plastoquinone, via FMN and iron-sulfur (Fe-S) centers, to quinones in the photosynthetic chain and possibly in a chloroplast respiratory chain. The immediate electron acceptor for the enzyme in this species is believed to be plastoquinone. Couples the redox reaction to proton translocation, and thus conserves the redox energy in a proton gradient. In Saccharum hybrid (Sugarcane), this protein is NAD(P)H-quinone oxidoreductase subunit 2 A, chloroplastic.